The primary structure comprises 448 residues: uncharacterized protein (448 aa).

Residues 1–50 (MAPEIFVKFKCASRDIKLLWASVFLRLLSYGLTNQVLTLFLNAINMTEDK) are Extracellular-facing. Residues 51–71 (IGLFMSLTLAGDVICSYILTW) form a helical membrane-spanning segment. Over 72–93 (YADSWGRRRVLVYGCAMMLLSG) the chain is Cytoplasmic. A helical transmembrane segment spans residues 94 to 114 (LVFSFSENFTLLLVFAIFGVI). The Extracellular segment spans residues 115 to 146 (SPSSDEVGPFKSIEEAMIAHLSPHNARPEIYA). Residues 147 to 167 (IHALVGTIGSALGAIICGIFV) traverse the membrane as a helical segment. At 168 to 184 (DLLKRTGLAATDLQCYK) the chain is on the cytoplasmic side. The chain crosses the membrane as a helical span at residues 185–205 (LVFLLYAFFAFCKMVIMLLLS). Topologically, residues 206 to 260 (DATELDGHYEHTDCNEETAEPLDVNDETAPLMRQATHPEERSNKLSKETVSVLMK) are extracellular. Residues 261–281 (LLVIFMVDSLGSGFMTSGWMV) form a helical membrane-spanning segment. The Cytoplasmic segment spans residues 282-287 (YYYSKQ). Residues 288–308 (FLMGSLALGTLFFITQLVMAS) form a helical membrane-spanning segment. At 309–333 (STIPSSIIARCFGPVRATLLVQIPS) the chain is on the extracellular side. Residues 334–354 (GIFSILIPMAKNYLPLSILFL) traverse the membrane as a helical segment. The Cytoplasmic segment spans residues 355–386 (NLHFATTAMDVTPRQILLTNIIKPRDLTKVMG). 386–393 (GVVNIGKT) lines the ATP pocket. Residues 387 to 407 (VVNIGKTFARCVGPIFTGILA) form a helical membrane-spanning segment. At 408–416 (NNNYLWLCY) the chain is on the extracellular side. A helical membrane pass occupies residues 417-437 (IISGSLVITADLILACMFLGV). At 438-448 (DAKIKKQMNRH) the chain is on the cytoplasmic side.

The protein resides in the membrane. This is an uncharacterized protein from Saccharomyces cerevisiae (strain ATCC 204508 / S288c) (Baker's yeast).